We begin with the raw amino-acid sequence, 213 residues long: Probable transaldolase (213 aa).

Lysine 83 acts as the Schiff-base intermediate with substrate in catalysis.

Belongs to the transaldolase family. Type 3B subfamily.

The protein localises to the cytoplasm. It carries out the reaction D-sedoheptulose 7-phosphate + D-glyceraldehyde 3-phosphate = D-erythrose 4-phosphate + beta-D-fructose 6-phosphate. It participates in carbohydrate degradation; pentose phosphate pathway; D-glyceraldehyde 3-phosphate and beta-D-fructose 6-phosphate from D-ribose 5-phosphate and D-xylulose 5-phosphate (non-oxidative stage): step 2/3. Its function is as follows. Transaldolase is important for the balance of metabolites in the pentose-phosphate pathway. In Geobacillus kaustophilus (strain HTA426), this protein is Probable transaldolase.